The chain runs to 347 residues: NADH-ubiquinone oxidoreductase chain 2 (347 aa).

11 consecutive transmembrane segments (helical) span residues 2 to 22, 26 to 46, 60 to 80, 94 to 114, 127 to 147, 151 to 171, 179 to 197, 201 to 223, 242 to 262, 274 to 294, and 325 to 345; these read LSPLIQSTLLMTLGLGTLVTF, SWILAWIGLEINTIAIIPLMA, YFIAQSAGSATLLVTACLAAW, IILNAMTLALMFKLGMAPMHF, TGMILATWQKLAPITLLIQIA, NNAFILGPALLSVFVGGWGGL, IIAYSSIAHMGWIASMAPF, ITWVTTLIYCLLTSTTFINLNTL, MLLLLLLLSLGGLPPLTGFTN, NLVIYLFMMMMGSLLSLFFYT, and LMTMLSINLFILTPQLMAIFI.

The protein belongs to the complex I subunit 2 family.

It localises to the mitochondrion inner membrane. It catalyses the reaction a ubiquinone + NADH + 5 H(+)(in) = a ubiquinol + NAD(+) + 4 H(+)(out). Its function is as follows. Core subunit of the mitochondrial membrane respiratory chain NADH dehydrogenase (Complex I) that is believed to belong to the minimal assembly required for catalysis. Complex I functions in the transfer of electrons from NADH to the respiratory chain. The immediate electron acceptor for the enzyme is believed to be ubiquinone. In Lampetra fluviatilis (European river lamprey), this protein is NADH-ubiquinone oxidoreductase chain 2 (MT-ND2).